Reading from the N-terminus, the 626-residue chain is Chaperone protein HtpG (626 aa).

The interval 1-339 (MSTNQETRGF…SNDLPLNVSR (339 aa)) is a; substrate-binding. A b region spans residues 340 to 555 (EILQDNKVTA…NDQMTTQMAK (216 aa)). The c stretch occupies residues 556-626 (LFAAAGQPVP…FIKRVNNLLG (71 aa)).

This sequence belongs to the heat shock protein 90 family. In terms of assembly, homodimer.

The protein resides in the cytoplasm. In terms of biological role, molecular chaperone. Has ATPase activity. The protein is Chaperone protein HtpG of Histophilus somni (strain 2336) (Haemophilus somnus).